A 365-amino-acid chain; its full sequence is Class I histocompatibility antigen, Gogo-C*0101/C*0102 alpha chain (365 aa).

The first 24 residues, 1–24, serve as a signal peptide directing secretion; the sequence is MRVMAPRTLILLLSGALALTETWA. The tract at residues 25-114 is alpha-1; it reads GSHSMRYFFT…LRGYYNQSED (90 aa). Over 25–308 the chain is Extracellular; the sequence is GSHSMRYFFT…EPSSQPTIPI (284 aa). N-linked (GlcNAc...) asparagine glycosylation is present at N110. The alpha-2 stretch occupies residues 115-206; it reads GSHTFQRMYG…ENGKETLQRA (92 aa). 2 disulfide bridges follow: C125–C188 and C227–C283. The interval 207-298 is alpha-3; the sequence is DPPKTHVTHH…GLLEPLTLRW (92 aa). The Ig-like C1-type domain occupies 209-297; the sequence is PKTHVTHHPI…KGLLEPLTLR (89 aa). The interval 299 to 308 is connecting peptide; sequence EPSSQPTIPI. Residues 309-332 traverse the membrane as a helical segment; it reads VGIVAGLAVLAVVFTGTVVAAVMC. Residues 333–365 are Cytoplasmic-facing; sequence RRKSSGGKGGSCSQAACSNSAQGSDESLIACKA. A phosphoserine mark is found at S356 and S359.

This sequence belongs to the MHC class I family. As to quaternary structure, heterodimer of an alpha chain and a beta chain (beta-2-microglobulin).

It localises to the membrane. Functionally, involved in the presentation of foreign antigens to the immune system. The chain is Class I histocompatibility antigen, Gogo-C*0101/C*0102 alpha chain from Gorilla gorilla gorilla (Western lowland gorilla).